The following is a 555-amino-acid chain: Steroid-22-oyl-CoA synthetase (555 aa).

The protein belongs to the ATP-dependent AMP-binding enzyme family.

It catalyses the reaction 3-oxochol-4-en-22-oate + ATP + CoA = 3-oxochol-4-en-22-oyl-CoA + AMP + diphosphate. The enzyme catalyses 3-hydroxy-9-oxo-9,10-seco-chola-1,3,5-trien-22-oate + ATP + CoA = 3-hydroxy-9-oxo-9,10-seco-chola-1,3,5-trien-22-oyl-CoA + AMP + diphosphate. Its pathway is steroid metabolism. Functionally, involved in cholate catabolism. Catalyzes the ATP-dependent formation of CoA thioesters of steroids with isopropanoyl side chains, likely occurring as degradation intermediates. Can use 4-BNC, HSBNC and HIDP as substrate. The chain is Steroid-22-oyl-CoA synthetase from Rhodococcus jostii (strain RHA1).